An 85-amino-acid polypeptide reads, in one-letter code: Small ribosomal subunit protein uS17 (85 aa).

The protein belongs to the universal ribosomal protein uS17 family. In terms of assembly, part of the 30S ribosomal subunit.

One of the primary rRNA binding proteins, it binds specifically to the 5'-end of 16S ribosomal RNA. This is Small ribosomal subunit protein uS17 from Spiroplasma citri.